Reading from the N-terminus, the 172-residue chain is Large ribosomal subunit protein uL10 (172 aa).

This sequence belongs to the universal ribosomal protein uL10 family. Part of the ribosomal stalk of the 50S ribosomal subunit. The N-terminus interacts with L11 and the large rRNA to form the base of the stalk. The C-terminus forms an elongated spine to which L12 dimers bind in a sequential fashion forming a multimeric L10(L12)X complex.

Functionally, forms part of the ribosomal stalk, playing a central role in the interaction of the ribosome with GTP-bound translation factors. This chain is Large ribosomal subunit protein uL10, found in Chlamydia trachomatis serovar A (strain ATCC VR-571B / DSM 19440 / HAR-13).